A 166-amino-acid chain; its full sequence is Eukaryotic translation initiation factor 5A (166 aa).

Positions 1–21 (MSDEDHDFSHQGGGDNASKTY) are disordered. Lys53 bears the Hypusine mark. The interval 101–121 (EDPSLPSHLSLMDDEGESRED) is disordered. A compositionally biased stretch (acidic residues) spans 112–121 (MDDEGESRED).

This sequence belongs to the eIF-5A family. Post-translationally, lys-53 undergoes hypusination, a unique post-translational modification that consists in the addition of a butylamino group from spermidine to lysine side chain, leading to the formation of the unusual amino acid hypusine. eIF-5As are the only known proteins to undergo this modification, which is essential for their function.

The protein localises to the cytoplasm. Functionally, translation factor that promotes translation elongation and termination, particularly upon ribosome stalling at specific amino acid sequence contexts. Binds between the exit (E) and peptidyl (P) site of the ribosome and promotes rescue of stalled ribosome: specifically required for efficient translation of polyproline-containing peptides as well as other motifs that stall the ribosome. Acts as a ribosome quality control (RQC) cofactor by joining the RQC complex to facilitate peptidyl transfer during CAT tailing step. This Leishmania donovani protein is Eukaryotic translation initiation factor 5A.